The chain runs to 319 residues: Protein SODIUM POTASSIUM ROOT DEFECTIVE 1 (319 aa).

Residues 1 to 13 (MLCASQASTTTLC) are compositionally biased toward polar residues. Disordered regions lie at residues 1–113 (MLCA…TPQG) and 191–248 (SPDN…NSSS). Residues 14–27 (STMDQTSQPSSSSS) are compositionally biased toward low complexity. Basic and acidic residues predominate over residues 36-49 (AIDRHNPIIRDGRR). Positions 58 to 67 (LNPSSSSSST) are enriched in low complexity. 2 stretches are compositionally biased toward polar residues: residues 104–113 (SCFSSDTPQG) and 200–210 (TKASPTASLSS). Residues 224–242 (SPPPPPPPSPPQSSPPSPP) show a composition bias toward pro residues. Residues 249-315 (DQVVVLRVSL…KVKNAQFWPE (67 aa)) form the HMA domain. Zn(2+) is bound by residues Cys260 and Cys263.

Interacts with FT, but not with TSF (TWIN SISTER OF FT). As to expression, expressed in vascular tissues of cotyledons, rosette leaves and roots in developing seedlings before and during the floral transition. Expressed specifically in the phloem companion cells. Not detected in embryos or seeds. Not detected in the vegetative shoot apex.

It is found in the cytoplasm. The protein resides in the nucleus. It localises to the endoplasmic reticulum. Functionally, required for root meristem maintenance after germination. Involved in phloem translocation, starch accumulation and flowering. Promotes flowering in the photoperiod pathway. Regulates long-distance movement of FT from leaves to the shoot apex through the phloem stream. The chain is Protein SODIUM POTASSIUM ROOT DEFECTIVE 1 from Arabidopsis thaliana (Mouse-ear cress).